The following is a 123-amino-acid chain: Small ribosomal subunit protein bS16 (123 aa).

Residues 79 to 123 (AGIAKRPSRNNPTKGEPGKKAQERLALAKQAEEEAAAKAAEAASE) form a disordered region.

It belongs to the bacterial ribosomal protein bS16 family.

The sequence is that of Small ribosomal subunit protein bS16 from Brucella melitensis biotype 2 (strain ATCC 23457).